Reading from the N-terminus, the 297-residue chain is Bifunctional protein FolD 2 (297 aa).

NADP(+) is bound by residues 177–179 (GKS), I202, and I243.

It belongs to the tetrahydrofolate dehydrogenase/cyclohydrolase family. In terms of assembly, homodimer.

The catalysed reaction is (6R)-5,10-methylene-5,6,7,8-tetrahydrofolate + NADP(+) = (6R)-5,10-methenyltetrahydrofolate + NADPH. It carries out the reaction (6R)-5,10-methenyltetrahydrofolate + H2O = (6R)-10-formyltetrahydrofolate + H(+). Its pathway is one-carbon metabolism; tetrahydrofolate interconversion. Catalyzes the oxidation of 5,10-methylenetetrahydrofolate to 5,10-methenyltetrahydrofolate and then the hydrolysis of 5,10-methenyltetrahydrofolate to 10-formyltetrahydrofolate. In Rhizorhabdus wittichii (strain DSM 6014 / CCUG 31198 / JCM 15750 / NBRC 105917 / EY 4224 / RW1) (Sphingomonas wittichii), this protein is Bifunctional protein FolD 2.